Reading from the N-terminus, the 182-residue chain is TTTVQYNPSEQYQPYPEQQEPFVQQQPFVQQQQQPFVQQQQMFLQPLLQQQLNPCKQFLVQQCSPVAVVPFLRSQILRQAICQVARQQCCRQLAQIPEQLRCPAIHSVVQAIILQQQQQQQFFQPQLQQQVFQPQLQQVFNQPQQQAQFEGMRAFALQALPAMCDVYVPPQCPVATAPLGGF.

A 1; approximate repeat occupies 21 to 26; that stretch reads PFVQQQ. Residues 21 to 41 are 3 X 7 AA tandem repeats of P-F-V-Q-Q-Q-Q; that stretch reads PFVQQQPFVQQQQQPFVQQQQ. A 2; approximate repeat occupies 27 to 34; that stretch reads PFVQQQQQ. Copy 3 of the repeat occupies 35–41; the sequence is PFVQQQQ.

Belongs to the gliadin/glutenin family. As to quaternary structure, monomer.

It is found in the vacuole. The protein resides in the aleurone grain. Its function is as follows. Seed storage protein. Serves as a source of nitrogen, carbon, and sulfur for the young developing seedling. In Avena sativa (Oat), this protein is Avenin-E.